The following is a 137-amino-acid chain: Putative pre-16S rRNA nuclease (137 aa).

Belongs to the YqgF nuclease family.

The protein localises to the cytoplasm. Its function is as follows. Could be a nuclease involved in processing of the 5'-end of pre-16S rRNA. In Anaeromyxobacter sp. (strain Fw109-5), this protein is Putative pre-16S rRNA nuclease.